A 161-amino-acid polypeptide reads, in one-letter code: Protein UXT homolog (161 aa).

The protein belongs to the UXT family.

The chain is Protein UXT homolog from Dictyostelium discoideum (Social amoeba).